We begin with the raw amino-acid sequence, 87 residues long: HssA/B-like protein 55 (87 aa).

Residues Met-1–Pro-13 are compositionally biased toward polar residues. Residues Met-1–Met-31 are disordered. Low complexity predominate over residues Asn-14–Met-31.

The protein belongs to the hssA/B family.

The polypeptide is HssA/B-like protein 55 (hssl55) (Dictyostelium discoideum (Social amoeba)).